A 186-amino-acid chain; its full sequence is Ribosome-recycling factor (186 aa).

It belongs to the RRF family.

The protein localises to the cytoplasm. In terms of biological role, responsible for the release of ribosomes from messenger RNA at the termination of protein biosynthesis. May increase the efficiency of translation by recycling ribosomes from one round of translation to another. This Rickettsia felis (strain ATCC VR-1525 / URRWXCal2) (Rickettsia azadi) protein is Ribosome-recycling factor.